The chain runs to 312 residues: Probable myosin light chain kinase DDB_G0282429 (312 aa).

Residues M1–E28 form a disordered region. Over residues S7–V27 the composition is skewed to acidic residues. Residues Y38–V290 enclose the Protein kinase domain. Residues I44–V52 and K67 each bind ATP. Catalysis depends on D158, which acts as the Proton acceptor.

This sequence belongs to the protein kinase superfamily. CAMK Ser/Thr protein kinase family. CaMK subfamily.

The catalysed reaction is L-seryl-[myosin light chain] + ATP = O-phospho-L-seryl-[myosin light chain] + ADP + H(+). The enzyme catalyses L-threonyl-[myosin light chain] + ATP = O-phospho-L-threonyl-[myosin light chain] + ADP + H(+). With respect to regulation, does not have a calmodulin-binding domain. Its function is as follows. May phosphorylate a specific serine in the N-terminus of a myosin light chain. This chain is Probable myosin light chain kinase DDB_G0282429, found in Dictyostelium discoideum (Social amoeba).